We begin with the raw amino-acid sequence, 363 residues long: MMYKHVGDDARGSSAGVVCCVDVVDDDVDALLCGEDAGELEREGEPAQGSSPSSSLSCAAAAAAAADDDDEDEDEHGVHGEVVQVTPGGEEHCYDYDYDVDVPVGAELVMPACSPPRTAVHRPGWSESVSWILKVRSVHGFQPATAYLAVSYMDRFMSSRSLPDHGWASQLLCVACLSLAAKMEESSAPPLLDLQIEGTRFIFEPRTIQRMELIVLVELDWRLRSVTPFAFVDFFACKVGSSGRSSRILALRACQIILSAIHELEFLNHCASSMAAAAVLFAVNESPAAMSHRSSVSSESAASWCIGLTEERISSCYQLLQRALNATARKRKRHPMILAACSSVTSSSSRSKRRKLDGHFGED.

A disordered region spans residues 39–77 (ELEREGEPAQGSSPSSSLSCAAAAAAAADDDDEDEDEHG). Over residues 50–65 (SSPSSSLSCAAAAAAA) the composition is skewed to low complexity. Over residues 66-75 (ADDDDEDEDE) the composition is skewed to acidic residues.

It belongs to the cyclin family. Cyclin D subfamily.

This chain is Cyclin-D1-1 (CYCD1-1), found in Oryza sativa subsp. japonica (Rice).